Consider the following 306-residue polypeptide: Aspartate carbamoyltransferase catalytic subunit (306 aa).

The carbamoyl phosphate site is built by Arg55 and Thr56. Lys84 is an L-aspartate binding site. Arg105, His133, and Gln136 together coordinate carbamoyl phosphate. 2 residues coordinate L-aspartate: Arg166 and Arg227. Residues Leu265 and Pro266 each contribute to the carbamoyl phosphate site.

This sequence belongs to the aspartate/ornithine carbamoyltransferase superfamily. ATCase family. In terms of assembly, heterododecamer (2C3:3R2) of six catalytic PyrB chains organized as two trimers (C3), and six regulatory PyrI chains organized as three dimers (R2).

The catalysed reaction is carbamoyl phosphate + L-aspartate = N-carbamoyl-L-aspartate + phosphate + H(+). Its pathway is pyrimidine metabolism; UMP biosynthesis via de novo pathway; (S)-dihydroorotate from bicarbonate: step 2/3. Functionally, catalyzes the condensation of carbamoyl phosphate and aspartate to form carbamoyl aspartate and inorganic phosphate, the committed step in the de novo pyrimidine nucleotide biosynthesis pathway. The chain is Aspartate carbamoyltransferase catalytic subunit from Neisseria meningitidis serogroup C / serotype 2a (strain ATCC 700532 / DSM 15464 / FAM18).